The following is a 454-amino-acid chain: CCA-adding enzyme (454 aa).

Residues serine 51 and lysine 54 each coordinate ATP. 2 residues coordinate CTP: serine 51 and lysine 54. Mg(2+)-binding residues include aspartate 63, aspartate 65, and aspartate 118. ATP contacts are provided by histidine 141, lysine 161, and tyrosine 170. Residues histidine 141, lysine 161, and tyrosine 170 each coordinate CTP.

Belongs to the tRNA nucleotidyltransferase/poly(A) polymerase family. Archaeal CCA-adding enzyme subfamily. Homodimer. The cofactor is Mg(2+).

It catalyses the reaction a tRNA precursor + 2 CTP + ATP = a tRNA with a 3' CCA end + 3 diphosphate. It carries out the reaction a tRNA with a 3' CCA end + 2 CTP + ATP = a tRNA with a 3' CCACCA end + 3 diphosphate. Catalyzes the addition and repair of the essential 3'-terminal CCA sequence in tRNAs without using a nucleic acid template. Adds these three nucleotides in the order of C, C, and A to the tRNA nucleotide-73, using CTP and ATP as substrates and producing inorganic pyrophosphate. tRNA 3'-terminal CCA addition is required both for tRNA processing and repair. Also involved in tRNA surveillance by mediating tandem CCA addition to generate a CCACCA at the 3' terminus of unstable tRNAs. While stable tRNAs receive only 3'-terminal CCA, unstable tRNAs are marked with CCACCA and rapidly degraded. In Methanothermobacter thermautotrophicus (strain ATCC 29096 / DSM 1053 / JCM 10044 / NBRC 100330 / Delta H) (Methanobacterium thermoautotrophicum), this protein is CCA-adding enzyme.